We begin with the raw amino-acid sequence, 266 residues long: Hydroxyethylthiazole kinase (266 aa).

Met43 is a substrate binding site. 2 residues coordinate ATP: Arg119 and Thr166. Gly193 provides a ligand contact to substrate.

It belongs to the Thz kinase family. Mg(2+) is required as a cofactor.

It carries out the reaction 5-(2-hydroxyethyl)-4-methylthiazole + ATP = 4-methyl-5-(2-phosphooxyethyl)-thiazole + ADP + H(+). It functions in the pathway cofactor biosynthesis; thiamine diphosphate biosynthesis; 4-methyl-5-(2-phosphoethyl)-thiazole from 5-(2-hydroxyethyl)-4-methylthiazole: step 1/1. Its function is as follows. Catalyzes the phosphorylation of the hydroxyl group of 4-methyl-5-beta-hydroxyethylthiazole (THZ). The chain is Hydroxyethylthiazole kinase from Methanococcus vannielii (strain ATCC 35089 / DSM 1224 / JCM 13029 / OCM 148 / SB).